We begin with the raw amino-acid sequence, 259 residues long: 5'-nucleotidase SurE (259 aa).

Positions 8, 9, 41, and 93 each coordinate a divalent metal cation.

It belongs to the SurE nucleotidase family. A divalent metal cation is required as a cofactor.

The protein resides in the cytoplasm. It carries out the reaction a ribonucleoside 5'-phosphate + H2O = a ribonucleoside + phosphate. Functionally, nucleotidase that shows phosphatase activity on nucleoside 5'-monophosphates. This Verminephrobacter eiseniae (strain EF01-2) protein is 5'-nucleotidase SurE.